The primary structure comprises 122 residues: Small ribosomal subunit protein uS13 (122 aa).

Positions 95–116 (GLPVRGQKTKTNARTRKGRRKT) are enriched in basic residues. Residues 95–122 (GLPVRGQKTKTNARTRKGRRKTVGAATK) form a disordered region.

This sequence belongs to the universal ribosomal protein uS13 family. In terms of assembly, part of the 30S ribosomal subunit. Forms a loose heterodimer with protein S19. Forms two bridges to the 50S subunit in the 70S ribosome.

Its function is as follows. Located at the top of the head of the 30S subunit, it contacts several helices of the 16S rRNA. In the 70S ribosome it contacts the 23S rRNA (bridge B1a) and protein L5 of the 50S subunit (bridge B1b), connecting the 2 subunits; these bridges are implicated in subunit movement. Contacts the tRNAs in the A and P-sites. The protein is Small ribosomal subunit protein uS13 of Campylobacter concisus (strain 13826).